We begin with the raw amino-acid sequence, 224 residues long: PKHD-type hydroxylase Shewana3_0717 (224 aa).

The 99-residue stretch at 78–176 (QFYPPLFNRY…RTAAFMWLQS (99 aa)) folds into the Fe2OG dioxygenase domain. Fe cation-binding residues include H96, D98, and H157. Position 167 (R167) interacts with 2-oxoglutarate.

It depends on Fe(2+) as a cofactor. The cofactor is L-ascorbate.

This is PKHD-type hydroxylase Shewana3_0717 from Shewanella sp. (strain ANA-3).